The primary structure comprises 142 residues: Transcriptional regulator MraZ (142 aa).

SpoVT-AbrB domains follow at residues 5 to 48 (EFEY…PLCE) and 77 to 120 (AFDV…DKET).

The protein belongs to the MraZ family. Forms oligomers.

The protein localises to the cytoplasm. It is found in the nucleoid. The polypeptide is Transcriptional regulator MraZ (Dehalococcoides mccartyi (strain ATCC BAA-2266 / KCTC 15142 / 195) (Dehalococcoides ethenogenes (strain 195))).